The primary structure comprises 469 residues: GTPase Der (469 aa).

EngA-type G domains follow at residues 3-166 (PVIA…PEDE) and 177-350 (LRLA…ESAN). Residues 9–16 (GRPNVGKS), 56–60 (DTGGI), 118–121 (NKVD), 183–190 (GRPNVGKS), 230–234 (DTAGV), and 295–298 (NKWD) each bind GTP. Residues 351-435 (LKVSPAKLTQ…PVKIEFKTSE (85 aa)) form the KH-like domain.

This sequence belongs to the TRAFAC class TrmE-Era-EngA-EngB-Septin-like GTPase superfamily. EngA (Der) GTPase family. Associates with the 50S ribosomal subunit.

GTPase that plays an essential role in the late steps of ribosome biogenesis. This Acinetobacter baumannii (strain AB0057) protein is GTPase Der.